A 504-amino-acid chain; its full sequence is MTLYLDGETLTIEDIKSFLQQQSKIEIIDDALERVKKSRAVVERIIENEETVYGITTGFGLFSDVRIDPTQYNELQVNLIRSHACGLGEPFSKEVALVMMILRLNTLLKGHSGATLELVRQLQFFINERIIPIIPQQGSLGASGDLAPLSHLALALIGEGKVLYRGEEKDSDDVLRELNRQPLNLQAKEGLALINGTQAMTAQGVISYIEAEDLGYQSEWIAALTHQSLNGIIDAYRHDVHSVRNFQEQINVAARMRDWLEGSTLTTRQAEIRVQDAYTLRCIPQIHGASFQVFNYVKQQLEFEMNAANDNPLIFEEANETFVISGGNFHGQPIAFALDHLKLGVSELANVSERRLERLVNPQLNGDLPAFLSPEPGLQSGAMIMQYAAASLVSENKTLAHPASVDSITSSANQEDHVSMGTTAARHGYQIIENARRVLAIECVIALQAAELKGVEGLSPKTRRKYEEFRSIVPSITHDRQFHKDIEAVAQYLKQSIYQTTACH.

Positions 142–144 (ASG) form a cross-link, 5-imidazolinone (Ala-Gly). S143 is modified (2,3-didehydroalanine (Ser)).

The protein belongs to the PAL/histidase family. Post-translationally, contains an active site 4-methylidene-imidazol-5-one (MIO), which is formed autocatalytically by cyclization and dehydration of residues Ala-Ser-Gly.

The protein resides in the cytoplasm. The enzyme catalyses L-histidine = trans-urocanate + NH4(+). The protein operates within amino-acid degradation; L-histidine degradation into L-glutamate; N-formimidoyl-L-glutamate from L-histidine: step 1/3. This is Histidine ammonia-lyase from Staphylococcus aureus (strain JH1).